The following is a 75-amino-acid chain: Putative defensin-like protein 55 (75 aa).

Residues 1–19 form the signal peptide; it reads MNITKAYVIFFLVVILTNS. Cystine bridges form between cysteine 39/cysteine 73, cysteine 43/cysteine 66, cysteine 52/cysteine 71, and cysteine 56/cysteine 72.

This sequence belongs to the DEFL family.

Its subcellular location is the secreted. The sequence is that of Putative defensin-like protein 55 from Arabidopsis thaliana (Mouse-ear cress).